The chain runs to 448 residues: MQITETSADGLRREFKVTVPADEIETRVANRLSEIGKTIKIPGFRPGKVPMALLKQRYGQSVMGEVLEQAVNDGSAKAVEEHKLRPALQPKVEVTKFEAGSDLEFSMAVELLPDFEPADMAAIAVEKPVVEVADAMVDDGLKRIAANRKTSAPLEAERPAQSGDIVVIDFDGSVDGEKRPGMKGEDHELELGSGSFIPGFEDQLVGAAKGEHRTVTVTFPENYHAAELSGKEAVFEVDVKDIRVPKAAEIDEDFAKSFGFDDLAGMRDAIRERMQADYASMSRMRAKRQLLDRLAETHDFPVPTGMVDIEFDQIWRRLQQELKDGEADPEDKEKDEEGLKAEYRAIAERRVRLGLLLSEVGRRNNITVTRDELGQAVVAEAQRYPGQERQVFDFFRNNPQAVEGLRAPIFEDKVVDFILGQVKLTERTVSVEDLMRDPEEDEGPTAAA.

The 86-residue stretch at 163–248 (GDIVVIDFDG…VKDIRVPKAA (86 aa)) folds into the PPIase FKBP-type domain.

It belongs to the FKBP-type PPIase family. Tig subfamily.

Its subcellular location is the cytoplasm. The catalysed reaction is [protein]-peptidylproline (omega=180) = [protein]-peptidylproline (omega=0). Involved in protein export. Acts as a chaperone by maintaining the newly synthesized protein in an open conformation. Functions as a peptidyl-prolyl cis-trans isomerase. The protein is Trigger factor of Rhodospirillum centenum (strain ATCC 51521 / SW).